The sequence spans 67 residues: Large ribosomal subunit protein uL30 (67 aa).

The protein belongs to the universal ribosomal protein uL30 family. In terms of assembly, part of the 50S ribosomal subunit.

The chain is Large ribosomal subunit protein uL30 from Thermotoga neapolitana (strain ATCC 49049 / DSM 4359 / NBRC 107923 / NS-E).